Reading from the N-terminus, the 311-residue chain is Olfactory receptor 8G1 (311 aa).

Residues 1–25 (MSGENNSSVTEFILAGLSEQPELQL) lie on the Extracellular side of the membrane. N-linked (GlcNAc...) asparagine glycans are attached at residues asparagine 5 and asparagine 6. Residues 26-46 (PLFLLFLGIYVVTVVGNLGMT) traverse the membrane as a helical segment. Topologically, residues 47 to 54 (TLIWLSSH) are cytoplasmic. Residues 55-75 (LHTPMYYFLSSLSFIDFCHST) form a helical membrane-spanning segment. At 76–99 (VITPKMLVNFVTEKNIISYPECMT) the chain is on the extracellular side. Cysteine 97 and cysteine 189 are joined by a disulfide. A helical membrane pass occupies residues 100–120 (QLYFFLVFAIAECHMLAAMAY). Over 121–139 (DRYMAICSPLLYSVIISNK) the chain is Cytoplasmic. A helical membrane pass occupies residues 140–160 (ACFSLILGVYIIGLVCASVHT). At 161 to 197 (GCMFRVQFCKFDLINHYFCDLLPLLKLSCSSIYVNKL) the chain is on the extracellular side. The helical transmembrane segment at 198 to 217 (LILCVGAFNILVPSLTILCS) threads the bilayer. Residues 218 to 237 (YIFIIASILHIRSTEGRSKA) lie on the Cytoplasmic side of the membrane. The helical transmembrane segment at 238–258 (FSTCSSHMLAVVIFFGSAAFM) threads the bilayer. At 259-271 (YLQPSSISSMDQG) the chain is on the extracellular side. The helical transmembrane segment at 272–292 (KVSSVFYTIIVPMLNPLIYSL) threads the bilayer. Residues 293-311 (RNKDVHVSLKKMLQRRTLL) are Cytoplasmic-facing.

The protein belongs to the G-protein coupled receptor 1 family.

Its subcellular location is the cell membrane. Odorant receptor. The polypeptide is Olfactory receptor 8G1 (OR8G1) (Homo sapiens (Human)).